Reading from the N-terminus, the 290-residue chain is Acetylglutamate kinase (290 aa).

Residues 65 to 66 (GG), Arg87, and Asn186 contribute to the substrate site.

It belongs to the acetylglutamate kinase family. ArgB subfamily.

Its subcellular location is the cytoplasm. The enzyme catalyses N-acetyl-L-glutamate + ATP = N-acetyl-L-glutamyl 5-phosphate + ADP. It participates in amino-acid biosynthesis; L-arginine biosynthesis; N(2)-acetyl-L-ornithine from L-glutamate: step 2/4. Its function is as follows. Catalyzes the ATP-dependent phosphorylation of N-acetyl-L-glutamate. This chain is Acetylglutamate kinase, found in Mycolicibacterium gilvum (strain PYR-GCK) (Mycobacterium gilvum (strain PYR-GCK)).